A 110-amino-acid chain; its full sequence is Large ribosomal subunit protein uL22 (110 aa).

It belongs to the universal ribosomal protein uL22 family. As to quaternary structure, part of the 50S ribosomal subunit.

Functionally, this protein binds specifically to 23S rRNA; its binding is stimulated by other ribosomal proteins, e.g. L4, L17, and L20. It is important during the early stages of 50S assembly. It makes multiple contacts with different domains of the 23S rRNA in the assembled 50S subunit and ribosome. Its function is as follows. The globular domain of the protein is located near the polypeptide exit tunnel on the outside of the subunit, while an extended beta-hairpin is found that lines the wall of the exit tunnel in the center of the 70S ribosome. The chain is Large ribosomal subunit protein uL22 from Salmonella arizonae (strain ATCC BAA-731 / CDC346-86 / RSK2980).